The chain runs to 126 residues: Protein ApaG (126 aa).

The ApaG domain maps to Ser-2–His-126.

This chain is Protein ApaG, found in Pseudomonas paraeruginosa (strain DSM 24068 / PA7) (Pseudomonas aeruginosa (strain PA7)).